The sequence spans 359 residues: DNA polymerase IV (359 aa).

The region spanning 4-185 (IIHIDMDCYF…LSLRKIPGVG (182 aa)) is the UmuC domain. Mg(2+)-binding residues include Asp-8 and Asp-103. Glu-104 is an active-site residue.

The protein belongs to the DNA polymerase type-Y family. In terms of assembly, monomer. Mg(2+) is required as a cofactor.

The protein localises to the cytoplasm. The enzyme catalyses DNA(n) + a 2'-deoxyribonucleoside 5'-triphosphate = DNA(n+1) + diphosphate. In terms of biological role, poorly processive, error-prone DNA polymerase involved in untargeted mutagenesis. Copies undamaged DNA at stalled replication forks, which arise in vivo from mismatched or misaligned primer ends. These misaligned primers can be extended by PolIV. Exhibits no 3'-5' exonuclease (proofreading) activity. May be involved in translesional synthesis, in conjunction with the beta clamp from PolIII. The protein is DNA polymerase IV of Shewanella sp. (strain MR-7).